The primary structure comprises 421 residues: Diaminopimelate decarboxylase (421 aa).

Lys-63 carries the N6-(pyridoxal phosphate)lysine modification. Pyridoxal 5'-phosphate is bound by residues Gly-242 and 278–281; that span reads EPGR. Substrate-binding residues include Arg-281, Arg-317, and Tyr-321. Residue Cys-346 is the Proton donor of the active site. Substrate contacts are provided by Glu-347 and Tyr-375. Tyr-375 contacts pyridoxal 5'-phosphate.

The protein belongs to the Orn/Lys/Arg decarboxylase class-II family. LysA subfamily. As to quaternary structure, homodimer. Pyridoxal 5'-phosphate is required as a cofactor.

The catalysed reaction is meso-2,6-diaminopimelate + H(+) = L-lysine + CO2. Its pathway is amino-acid biosynthesis; L-lysine biosynthesis via DAP pathway; L-lysine from DL-2,6-diaminopimelate: step 1/1. Specifically catalyzes the decarboxylation of meso-diaminopimelate (meso-DAP) to L-lysine. The sequence is that of Diaminopimelate decarboxylase from Zymomonas mobilis subsp. mobilis (strain ATCC 31821 / ZM4 / CP4).